Reading from the N-terminus, the 173-residue chain is Dual-action ribosomal maturation protein DarP (173 aa).

The protein belongs to the DarP family.

The protein resides in the cytoplasm. Functionally, member of a network of 50S ribosomal subunit biogenesis factors which assembles along the 30S-50S interface, preventing incorrect 23S rRNA structures from forming. Promotes peptidyl transferase center (PTC) maturation. This chain is Dual-action ribosomal maturation protein DarP, found in Pseudomonas putida (strain GB-1).